A 306-amino-acid chain; its full sequence is Aspartate carbamoyltransferase catalytic subunit (306 aa).

Carbamoyl phosphate contacts are provided by Arg51 and Thr52. Lys79 is an L-aspartate binding site. 3 residues coordinate carbamoyl phosphate: Arg101, His129, and Gln132. Residues Arg162 and Arg213 each coordinate L-aspartate. Residues Ala254 and Pro255 each contribute to the carbamoyl phosphate site.

Belongs to the aspartate/ornithine carbamoyltransferase superfamily. ATCase family. Heterododecamer (2C3:3R2) of six catalytic PyrB chains organized as two trimers (C3), and six regulatory PyrI chains organized as three dimers (R2).

It carries out the reaction carbamoyl phosphate + L-aspartate = N-carbamoyl-L-aspartate + phosphate + H(+). The protein operates within pyrimidine metabolism; UMP biosynthesis via de novo pathway; (S)-dihydroorotate from bicarbonate: step 2/3. In terms of biological role, catalyzes the condensation of carbamoyl phosphate and aspartate to form carbamoyl aspartate and inorganic phosphate, the committed step in the de novo pyrimidine nucleotide biosynthesis pathway. This Bacillus thuringiensis (strain Al Hakam) protein is Aspartate carbamoyltransferase catalytic subunit.